The sequence spans 467 residues: UDP-N-acetylmuramate--L-alanine ligase (467 aa).

ATP is bound at residue 114–120; that stretch reads GTHGKTT.

It belongs to the MurCDEF family.

It localises to the cytoplasm. It carries out the reaction UDP-N-acetyl-alpha-D-muramate + L-alanine + ATP = UDP-N-acetyl-alpha-D-muramoyl-L-alanine + ADP + phosphate + H(+). It participates in cell wall biogenesis; peptidoglycan biosynthesis. Functionally, cell wall formation. The chain is UDP-N-acetylmuramate--L-alanine ligase from Rhodopseudomonas palustris (strain ATCC BAA-98 / CGA009).